The chain runs to 621 residues: Proton pump-interactor BIP131 (621 aa).

The stretch at 250-305 (IDEVKRDRQAVRDKIKVLEDQIHAVDGEIAALQDDLTAATARKDKAFEALNELRKT) forms a coiled coil. Residues 374-387 (SRDGRMRNPDEKPI) are compositionally biased toward basic and acidic residues. The tract at residues 374–572 (SRDGRMRNPD…RSTVTKTKTP (199 aa)) is disordered. Low complexity predominate over residues 430–441 (KAPAKAAKAKQP). Over residues 448 to 516 (PDVHDDEPPK…AEKKLKEKEK (69 aa)) the composition is skewed to basic and acidic residues. Residues 466–524 (EAKLKEMKRQEEIEKNKLALERKKKQAEKQAMKAAARAEKEAEKKLKEKEKKARKRSAT) are a coiled coil. Residues 589–609 (WGAPMAALAAALVALLGALVY) traverse the membrane as a helical segment.

It belongs to the plant proton pump-interactor protein family. As to quaternary structure, interacts with BRI1.

It localises to the cell membrane. Its function is as follows. May regulate plasma membrane ATPase activity. This is Proton pump-interactor BIP131 from Oryza sativa subsp. japonica (Rice).